The sequence spans 212 residues: Peptidyl-prolyl cis-trans isomerase-like 3 (212 aa).

The PPIase cyclophilin-type domain maps to 1-198; sequence MSVTLHTTHG…EGEEGGYEAI (198 aa).

Belongs to the cyclophilin-type PPIase family. PPIL3 subfamily.

The catalysed reaction is [protein]-peptidylproline (omega=180) = [protein]-peptidylproline (omega=0). Its function is as follows. PPIases accelerate the folding of proteins. It catalyzes the cis-trans isomerization of proline imidic peptide bonds in oligopeptides. In Aspergillus fumigatus (strain ATCC MYA-4609 / CBS 101355 / FGSC A1100 / Af293) (Neosartorya fumigata), this protein is Peptidyl-prolyl cis-trans isomerase-like 3 (cyp10).